We begin with the raw amino-acid sequence, 319 residues long: uncharacterized protein (319 aa).

The region spanning 29-164 (VNISSLALLK…LDAFRSVNPL (136 aa)) is the MPN domain. Residues H111, H113, and D124 each coordinate Zn(2+). The short motif at 111-124 (HSHPGFGCWLSSVD) is the JAMM motif element.

This sequence belongs to the peptidase M67A family.

This is an uncharacterized protein from Caenorhabditis elegans.